A 210-amino-acid polypeptide reads, in one-letter code: Synaptosomal-associated protein 23 (210 aa).

The residue at position 1 (methionine 1) is an N-acetylmethionine. A phosphoserine mark is found at serine 5, serine 20, serine 23, and serine 34. The 63-residue stretch at 14 to 76 (HQVTDESLES…REAEKTLTEL (63 aa)) folds into the t-SNARE coiled-coil homology 1 domain. Positions 23 to 76 (STRRILGLAIESQDAGIKTITMLDEQGEQLNRIEEGMDQINKDMREAEKTLTEL) form a coiled coil. 5 S-palmitoyl cysteine lipidation sites follow: cysteine 79, cysteine 80, cysteine 83, cysteine 85, and cysteine 87. Residues 104 to 135 (GDGGDNSPSNVVSKQPSRITNGQPQQTTGAAS) are disordered. The segment covering 109–133 (NSPSNVVSKQPSRITNGQPQQTTGA) has biased composition (polar residues). 2 positions are modified to phosphoserine: serine 110 and serine 160. The 63-residue stretch at 145-207 (DAREDEMEEN…DIANTRAKKL (63 aa)) folds into the t-SNARE coiled-coil homology 2 domain.

Belongs to the SNAP-25 family. Homotetramer (via coiled-coil domain), also forms heterotetramers with STX4 and VAMP3. Found in a complex with VAMP8 and STX1A. Found in a complex with VAMP8 and STX4 in pancreas. Interacts simultaneously with SNAPIN and SYN4. Interacts with STX1A. Interacts with STX12. Interacts tightly to multiple syntaxins and synaptobrevins/VAMPs. Interacts with ZDHHC13 (via ANK repeats). Interacts with ZDHHC17 (via ANK repeats). (Microbial infection) Targeted and hydrolyzed by C.botulinum neurotoxin type A (BoNT/A, botA) which hydrolyzes the 202-Thr-|-Arg-203 bond; the in vitro reaction is not highly efficient. In terms of processing, (Microbial infection) Targeted and hydrolyzed by C.botulinum neurotoxin type E (BoNT/E) which hydrolyzes the 185-Arg-|-Ile-186 bond; the in vitro reaction is more efficient than that of BoNT/A. As to expression, expressed in non-neuronal tissues.

It localises to the cell membrane. The protein localises to the synapse. Its subcellular location is the synaptosome. Its function is as follows. Essential component of the high affinity receptor for the general membrane fusion machinery and an important regulator of transport vesicle docking and fusion. This is Synaptosomal-associated protein 23 (Snap23) from Mus musculus (Mouse).